An 87-amino-acid chain; its full sequence is uncharacterized protein (87 aa).

Transmembrane regions (helical) follow at residues 10 to 30 (VAFTVLAYFTFFAGVFLFSIG) and 43 to 63 (GYYIAVMILVAVGAILTQKVT).

Its subcellular location is the cell membrane. This is an uncharacterized protein from Bacillus subtilis (strain 168).